A 508-amino-acid polypeptide reads, in one-letter code: Pyruvate kinase, cytosolic isozyme (508 aa).

Residue Arg48 coordinates substrate. Asn50, Ser52, Asp82, and Thr83 together coordinate K(+). Residue 50–53 (NFSH) participates in ATP binding. ATP is bound by residues Arg89 and Lys174. Glu240 lines the Mg(2+) pocket. Gly263, Asp264, and Thr296 together coordinate substrate. Asp264 lines the Mg(2+) pocket.

The protein belongs to the pyruvate kinase family. As to quaternary structure, homotetramer. Mg(2+) serves as cofactor. K(+) is required as a cofactor.

The protein localises to the cytoplasm. The enzyme catalyses pyruvate + ATP = phosphoenolpyruvate + ADP + H(+). The protein operates within carbohydrate degradation; glycolysis; pyruvate from D-glyceraldehyde 3-phosphate: step 5/5. This chain is Pyruvate kinase, cytosolic isozyme, found in Nicotiana tabacum (Common tobacco).